A 273-amino-acid polypeptide reads, in one-letter code: 4-hydroxy-tetrahydrodipicolinate reductase (273 aa).

NAD(+) is bound by residues 12–17 (GAGGRM) and glutamate 38. Arginine 39 provides a ligand contact to NADP(+). NAD(+) is bound by residues 102-104 (GTT) and 126-129 (AANF). Histidine 159 functions as the Proton donor/acceptor in the catalytic mechanism. Residue histidine 160 coordinates (S)-2,3,4,5-tetrahydrodipicolinate. Lysine 163 (proton donor) is an active-site residue. Position 169–170 (169–170 (GT)) interacts with (S)-2,3,4,5-tetrahydrodipicolinate.

This sequence belongs to the DapB family. As to quaternary structure, homotetramer.

Its subcellular location is the cytoplasm. The catalysed reaction is (S)-2,3,4,5-tetrahydrodipicolinate + NAD(+) + H2O = (2S,4S)-4-hydroxy-2,3,4,5-tetrahydrodipicolinate + NADH + H(+). It catalyses the reaction (S)-2,3,4,5-tetrahydrodipicolinate + NADP(+) + H2O = (2S,4S)-4-hydroxy-2,3,4,5-tetrahydrodipicolinate + NADPH + H(+). It participates in amino-acid biosynthesis; L-lysine biosynthesis via DAP pathway; (S)-tetrahydrodipicolinate from L-aspartate: step 4/4. Catalyzes the conversion of 4-hydroxy-tetrahydrodipicolinate (HTPA) to tetrahydrodipicolinate. The protein is 4-hydroxy-tetrahydrodipicolinate reductase of Salmonella schwarzengrund (strain CVM19633).